The primary structure comprises 157 residues: Heat shock 22 kDa protein, chloroplastic (157 aa).

Residues 40–155 form the sHSP domain; the sequence is GKAGHTHAPM…KPEPKRIAVT (116 aa).

The protein belongs to the small heat shock protein (HSP20) family.

The protein localises to the plastid. The protein resides in the chloroplast. The sequence is that of Heat shock 22 kDa protein, chloroplastic from Chlamydomonas reinhardtii (Chlamydomonas smithii).